A 215-amino-acid chain; its full sequence is Intraflagellar transport protein 43 homolog B (215 aa).

A disordered region spans residues 1 to 107 (MDDHLKLGDS…SDGEGDIPVI (107 aa)).

This sequence belongs to the IFT43 family. In terms of assembly, component of IFT complex A.

In terms of biological role, component of IFT complex A (IFT-A) involved in retrograde ciliary transport along microtubules from the ciliary tip to the base. This is Intraflagellar transport protein 43 homolog B (ift43b) from Salmo salar (Atlantic salmon).